We begin with the raw amino-acid sequence, 552 residues long: Nucleolar complex protein 4 (552 aa).

The protein belongs to the CBF/MAK21 family. Interacts with NOP14 and MPP10. Interacts with snoRNA U3. Component of the ribosomal small subunit (SSU) processome composed of at least 40 protein subunits and snoRNA U3.

It localises to the nucleus. The protein localises to the nucleolus. Its function is as follows. Involved in nucleolar processing of pre-18S ribosomal RNA and ribosome assembly. Has a role in the nuclear export of 40S pre-ribosomal subunit to the cytoplasm. Its subcellular location and association with pre-40S subunit are unaffected by RPS19 disruptions, suggesting it acts before the ribosomal protein. The protein is Nucleolar complex protein 4 (NOC4) of Saccharomyces cerevisiae (strain ATCC 204508 / S288c) (Baker's yeast).